A 517-amino-acid polypeptide reads, in one-letter code: GMP synthase [glutamine-hydrolyzing] (517 aa).

Residues 11–202 (KIIVLDYGSQ…AFDVCHAEAN (192 aa)) enclose the Glutamine amidotransferase type-1 domain. C88 (nucleophile) is an active-site residue. Catalysis depends on residues H176 and E178. A GMPS ATP-PPase domain is found at 203–392 (WSMDDFITKQ…LGMPHSLVWR (190 aa)). 230-236 (SGGVDSS) lines the ATP pocket.

As to quaternary structure, homodimer.

The catalysed reaction is XMP + L-glutamine + ATP + H2O = GMP + L-glutamate + AMP + diphosphate + 2 H(+). The protein operates within purine metabolism; GMP biosynthesis; GMP from XMP (L-Gln route): step 1/1. Its function is as follows. Catalyzes the synthesis of GMP from XMP. This chain is GMP synthase [glutamine-hydrolyzing] (guaA), found in Lacticaseibacillus rhamnosus (Lactobacillus rhamnosus).